The following is a 361-amino-acid chain: Large ribosomal subunit protein uL3 (361 aa).

A disordered region spans residues 339-361; it reads RPPKKKPPVQRPQITYVSVESKQ. Positions 350 to 361 are enriched in polar residues; sequence PQITYVSVESKQ.

The protein belongs to the universal ribosomal protein uL3 family. In terms of assembly, part of the 50S ribosomal subunit. Forms a cluster with proteins L14 and L24e.

Its function is as follows. One of the primary rRNA binding proteins, it binds directly near the 3'-end of the 23S rRNA, where it nucleates assembly of the 50S subunit. The polypeptide is Large ribosomal subunit protein uL3 (Pyrococcus abyssi (strain GE5 / Orsay)).